Consider the following 297-residue polypeptide: Formylmethanofuran--tetrahydromethanopterin formyltransferase (297 aa).

It belongs to the FTR family. Homotetramer.

It is found in the cytoplasm. The enzyme catalyses N-formylmethanofuran + 5,6,7,8-tetrahydromethanopterin + H(+) = N(5)-formyl-5,6,7,8-tetrahydromethanopterin + methanofuran. It participates in one-carbon metabolism; methanogenesis from CO(2); 5,10-methenyl-5,6,7,8-tetrahydromethanopterin from CO(2): step 2/3. Catalyzes the reversible transfer of a formyl group from formylmethanofuran (formyl-MFR) to tetrahydromethanopterin (H(4)MPT) to produce 5-formyl tetrahydromethanopterin (5-formyl-H(4)MPT) and methanofuran (MFR). This chain is Formylmethanofuran--tetrahydromethanopterin formyltransferase, found in Methanosarcina barkeri (strain Fusaro / DSM 804).